We begin with the raw amino-acid sequence, 136 residues long: Large-conductance mechanosensitive channel (136 aa).

The next 3 membrane-spanning stretches (helical) occupy residues Ile-15–Val-35, Ile-38–Gln-58, and Gly-80–Val-100.

The protein belongs to the MscL family. As to quaternary structure, homopentamer.

Its subcellular location is the cell inner membrane. In terms of biological role, channel that opens in response to stretch forces in the membrane lipid bilayer. May participate in the regulation of osmotic pressure changes within the cell. This chain is Large-conductance mechanosensitive channel, found in Bartonella tribocorum (strain CIP 105476 / IBS 506).